A 357-amino-acid chain; its full sequence is Protein-arginine kinase (357 aa).

The region spanning 24-256 (VIISSRVRLA…LQLVTQERAA (233 aa)) is the Phosphagen kinase C-terminal domain. ATP contacts are provided by residues 27-31 (SSRVR), His-93, Arg-127, 178-182 (RASVM), and 209-214 (RGLYGE). The RDXXRA motif of the pArg binding pocket involved in allosteric regulation signature appears at 339–344 (RDIFRA).

Belongs to the ATP:guanido phosphotransferase family.

The catalysed reaction is L-arginyl-[protein] + ATP = N(omega)-phospho-L-arginyl-[protein] + ADP + H(+). With respect to regulation, appears to be allosterically activated by the binding of pArg-containing polypeptides to the pArg-binding pocket localized in the C-terminal domain of McsB. Catalyzes the specific phosphorylation of arginine residues in proteins. This Desulforamulus reducens (strain ATCC BAA-1160 / DSM 100696 / MI-1) (Desulfotomaculum reducens) protein is Protein-arginine kinase.